Reading from the N-terminus, the 548-residue chain is Membrane-associated tyrosine- and threonine-specific cdc2-inhibitory kinase (548 aa).

The interval 61–89 (PNKQRSWSQPRPQSVSFRSPQNKTPASKL) is disordered. Positions 63–85 (KQRSWSQPRPQSVSFRSPQNKTP) are enriched in polar residues. The Protein kinase domain maps to 103–353 (FKSICKLGRG…VDWLLSLPAI (251 aa)). Residues 109–117 (LGRGSFGEV) and lysine 132 contribute to the ATP site. Residue aspartate 226 is the Proton acceptor of the active site. Mg(2+) contacts are provided by asparagine 231, aspartate 244, and glycine 246. The Membrane-association motif motif lies at 376–392 (VYQFIVWLLSFVFQWLN). The interval 464 to 523 (SPDLLSRPSLGSTSTPRNLSPEFSMRKRSALPLTPNVSRISQDSTGKSRSPSTSHSSSGF) is disordered. Residues 472–481 (SLGSTSTPRN) are compositionally biased toward polar residues. Threonine 478 bears the Phosphothreonine; by CDK1 mark. Residues 507–521 (STGKSRSPSTSHSSS) show a composition bias toward low complexity.

Belongs to the protein kinase superfamily. Ser/Thr protein kinase family. WEE1 subfamily. In terms of assembly, interacts with CDC2-CCNB1 complex. Interacts with Mos during oocyte maturation. Autophosphorylated. Phosphorylated on undefined residues by RSK2 and Mos kinases. Phosphorylation at Thr-478 by cdk1 creates a docking site for plk1/plx1, leading to subsequent phosphorylation by plk1/plk1 and inhibition of the protein kinase activity kinase activity.

The protein localises to the endoplasmic reticulum membrane. It is found in the golgi apparatus membrane. The enzyme catalyses L-seryl-[protein] + ATP = O-phospho-L-seryl-[protein] + ADP + H(+). It carries out the reaction L-threonyl-[protein] + ATP = O-phospho-L-threonyl-[protein] + ADP + H(+). Its activity is regulated as follows. Negatively regulated by hyperphosphorylation during mitosis. The plk1/plk1 protein kinase may be required for mitotic phosphorylation. Inactivated during oocyte maturation by phosphorylation by RSK2 and Mos kinase. Acts as a negative regulator of entry into mitosis (G2 to M transition) by phosphorylation of the CDK1 kinase specifically when CDK1 is complexed to cyclins. Mediates phosphorylation of CDK1 predominantly on 'Thr-14'. Also involved in Golgi fragmentation. May be involved in phosphorylation of CDK1 on 'Tyr-15' to a lesser degree, however tyrosine kinase activity is unclear and may be indirect. This is Membrane-associated tyrosine- and threonine-specific cdc2-inhibitory kinase (pkmyt1) from Xenopus laevis (African clawed frog).